Reading from the N-terminus, the 334-residue chain is Glycerol-1-phosphate dehydrogenase [NAD(P)+] (334 aa).

NAD(+) is bound by residues 77 to 81 (GRPID) and 99 to 102 (TTAS). Residue aspartate 104 participates in substrate binding. Serine 108 serves as a coordination point for NAD(+). Position 147 (aspartate 147) interacts with substrate. Aspartate 147 and histidine 225 together coordinate Zn(2+). Histidine 229 is a substrate binding site. Histidine 246 is a Zn(2+) binding site.

The protein belongs to the glycerol-1-phosphate dehydrogenase family. The cofactor is Zn(2+).

It localises to the cytoplasm. It catalyses the reaction sn-glycerol 1-phosphate + NAD(+) = dihydroxyacetone phosphate + NADH + H(+). The catalysed reaction is sn-glycerol 1-phosphate + NADP(+) = dihydroxyacetone phosphate + NADPH + H(+). It functions in the pathway membrane lipid metabolism; glycerophospholipid metabolism. Functionally, catalyzes the NAD(P)H-dependent reduction of dihydroxyacetonephosphate (DHAP or glycerone phosphate) to glycerol 1-phosphate (G1P). The G1P thus generated is used as the glycerophosphate backbone of phospholipids in the cellular membranes of Archaea. This is Glycerol-1-phosphate dehydrogenase [NAD(P)+] from Methanococcus maripaludis (strain C5 / ATCC BAA-1333).